The chain runs to 130 residues: Probable 4-amino-4-deoxy-L-arabinose-phosphoundecaprenol flippase subunit ArnF (130 aa).

Residues 1 to 4 (MRGY) lie on the Cytoplasmic side of the membrane. The helical transmembrane segment at 5 to 25 (AWGAASVLLVTLAQLLMKWGM) threads the bilayer. Over 26–47 (AQIPLMSFADVTLNLFMQYWLP) the chain is Periplasmic. The helical transmembrane segment at 48–68 (LVVVSGGIFGYALSMLCWFFA) threads the bilayer. Over 69 to 77 (LHHLPLNRA) the chain is Cytoplasmic. A helical membrane pass occupies residues 78–98 (YPLLSVSYALVYLAAVILPWF). Asparagine 99 is a topological domain (periplasmic). The chain crosses the membrane as a helical span at residues 100 to 120 (ESATLLKTLGTLFILFGVWLI). At 121–130 (NSQAKVKTPQ) the chain is on the cytoplasmic side.

This sequence belongs to the ArnF family. As to quaternary structure, heterodimer of ArnE and ArnF.

Its subcellular location is the cell inner membrane. Its pathway is bacterial outer membrane biogenesis; lipopolysaccharide biosynthesis. Functionally, translocates 4-amino-4-deoxy-L-arabinose-phosphoundecaprenol (alpha-L-Ara4N-phosphoundecaprenol) from the cytoplasmic to the periplasmic side of the inner membrane. This Serratia proteamaculans (strain 568) protein is Probable 4-amino-4-deoxy-L-arabinose-phosphoundecaprenol flippase subunit ArnF.